A 159-amino-acid polypeptide reads, in one-letter code: Putative RING-H2 finger protein ATL69 (159 aa).

The helical transmembrane segment at 13-33 threads the bilayer; sequence LGYGIAIAVSILVLISFIMLA. An RING-type; atypical zinc finger spans residues 94 to 136; it reads CSICLCDYEAREPVRCIPECNHCFHTDCVDEWLRTSATCPLCR.

It belongs to the RING-type zinc finger family. ATL subfamily.

Its subcellular location is the membrane. It carries out the reaction S-ubiquitinyl-[E2 ubiquitin-conjugating enzyme]-L-cysteine + [acceptor protein]-L-lysine = [E2 ubiquitin-conjugating enzyme]-L-cysteine + N(6)-ubiquitinyl-[acceptor protein]-L-lysine.. It functions in the pathway protein modification; protein ubiquitination. This Arabidopsis thaliana (Mouse-ear cress) protein is Putative RING-H2 finger protein ATL69 (ATL69).